A 527-amino-acid chain; its full sequence is Tubulin-specific chaperone E (527 aa).

S2 is subject to N-acetylserine. The 45-residue stretch at 27–71 (GVVPPVAGPWLGVEWDNPERGKHDGSHEGTVYFQCRHPTGGSFIR) folds into the CAP-Gly domain. LRR repeat units follow at residues 154–175 (NIRKVDLSKNLLSSWDEVIHIA), 180–200 (HLEVLNVSENKLKFPSGSVLT), 205–226 (ALKVLVLNQTGITWAEVLRCAM), 230–252 (GLEELYLESNNIFISERPTDVLQ), 253–274 (TVKLLDLSSNQLIDENQLYLIA), 278–299 (RLEQLILSDIGISSLHFPDAGI), and 308–329 (SLKYLVVNDNQISQWSFFNELD). One can recognise an LRRCT domain in the interval 342–384 (NPLTKEDKEAETARLLIIASIGQLKTLNKCEILPEERRRAELD). K463 bears the N6-acetyllysine mark. Residue S495 is modified to Phosphoserine.

It belongs to the TBCE family. Supercomplex made of cofactors A to E. Cofactors A and D function by capturing and stabilizing tubulin in a quasi-native conformation. Cofactor E binds to the cofactor D-tubulin complex; interaction with cofactor C then causes the release of tubulin polypeptides that are committed to the native state. Cofactors B and E can form a heterodimer which binds to alpha-tubulin and enhances their ability to dissociate tubulin heterodimers. Interacts with TBCD.

The protein resides in the cytoplasm. It is found in the cytoskeleton. Functionally, tubulin-folding protein; involved in the second step of the tubulin folding pathway and in the regulation of tubulin heterodimer dissociation. Required for correct organization of microtubule cytoskeleton and mitotic splindle, and maintenance of the neuronal microtubule network. The polypeptide is Tubulin-specific chaperone E (TBCE) (Pongo abelii (Sumatran orangutan)).